We begin with the raw amino-acid sequence, 102 residues long: ATP-dependent Clp protease adapter protein ClpS (102 aa).

The protein belongs to the ClpS family. Binds to the N-terminal domain of the chaperone ClpA.

Its function is as follows. Involved in the modulation of the specificity of the ClpAP-mediated ATP-dependent protein degradation. The polypeptide is ATP-dependent Clp protease adapter protein ClpS (Shewanella putrefaciens (strain CN-32 / ATCC BAA-453)).